The chain runs to 185 residues: Proton-translocating ferredoxin:NAD(+) oxidoreductase complex subunit G (185 aa).

The chain crosses the membrane as a helical span at residues 14–34 (TKNLTITCFISGIIIAAVYYI). Threonine 161 carries the post-translational modification FMN phosphoryl threonine.

It belongs to the RnfG family. In terms of assembly, the complex is composed of six subunits: RnfA, RnfB, RnfC, RnfD, RnfE and RnfG. FMN serves as cofactor.

It is found in the cell membrane. Functionally, part of a membrane-bound complex that couples electron transfer with translocation of ions across the membrane. Couples electron transfer from reduced ferredoxin to NAD(+) with translocation of H(+) out of the cell. Essential for energy conservation during autotrophic growth. Contributes to ATP synthesis during heterotrophic growth. The sequence is that of Proton-translocating ferredoxin:NAD(+) oxidoreductase complex subunit G from Clostridium ljungdahlii (strain ATCC 55383 / DSM 13528 / PETC).